A 131-amino-acid chain; its full sequence is Large ribosomal subunit protein bL19 (131 aa).

The tract at residues 112–131 is disordered; that stretch reads KSARIAERAGGPKASASTEA.

The protein belongs to the bacterial ribosomal protein bL19 family.

Its function is as follows. This protein is located at the 30S-50S ribosomal subunit interface and may play a role in the structure and function of the aminoacyl-tRNA binding site. In Caulobacter vibrioides (strain ATCC 19089 / CIP 103742 / CB 15) (Caulobacter crescentus), this protein is Large ribosomal subunit protein bL19.